The chain runs to 345 residues: Serpentine receptor class beta-13 (345 aa).

Residues 1–22 lie on the Extracellular side of the membrane; that stretch reads MAGINQTKCDLGFQITFNTVYR. A glycan (N-linked (GlcNAc...) asparagine) is linked at Asn5. The helical transmembrane segment at 23–43 threads the bilayer; the sequence is FSQFYTFSVSSFAVPGLIYFM. Residues 44–58 lie on the Cytoplasmic side of the membrane; it reads FKRLFQLYFHGNLKT. Residues 59–79 traverse the membrane as a helical segment; sequence LLIAYFISILLYAVMLCFAFG. Topologically, residues 80–103 are extracellular; it reads YQFFVPFFIKSNCDLIINKTLFKY. N-linked (GlcNAc...) asparagine glycosylation occurs at Asn97. A helical membrane pass occupies residues 104-124; the sequence is IHTSVIFLLTTPMMFPLGFSI. Topologically, residues 125–142 are cytoplasmic; sequence ERFTAMAMASRYENIRTL. A helical transmembrane segment spans residues 143–163; it reads IGPVLVIFLIIPNCIIFYFLF. Topologically, residues 164 to 189 are extracellular; it reads QHETYDDTFISFLMLPNTTAVNFNTY. A glycan (N-linked (GlcNAc...) asparagine) is linked at Asn180. Residues 190–210 form a helical membrane-spanning segment; the sequence is LWFLLYLNIGNLALNVLLLLV. Topologically, residues 211-241 are cytoplasmic; it reads HRKFKRRLLLHKTSLSTRYAIEEISQSSKFT. Residues 242 to 262 form a helical membrane-spanning segment; that stretch reads LIITFTHLLFFGCNTICSILV. The Extracellular segment spans residues 263-280; sequence RVLGEPFFGSFINHSVAR. The N-linked (GlcNAc...) asparagine glycan is linked to Asn275. Residues 281–301 form a helical membrane-spanning segment; that stretch reads GVNCAVPTYNLVIVVVGFVSL. Residues 302–345 lie on the Cytoplasmic side of the membrane; that stretch reads SKLNSRRQQEVQTTVQLKTTGKEGARNYDNITANQWATITQIGF.

The protein belongs to the nematode receptor-like protein srb family. Expressed in the head sensory neurons ASI, ASK and AWB. Not expressed in male somatic gonads or sperm.

It localises to the cell membrane. The protein localises to the perikaryon. It is found in the cell projection. The protein resides in the dendrite. Functionally, G-protein coupled receptor that antagonizes the negative effects of the gcy-35 oxygen sensor on spermatogenesis. This leads to the maintenance of mitochondrial function in developing spermatocytes and/or spermatids prior to testis maturation during the early larval stages. Regulates the navigational capacity of sperm during hyperoxic conditions ensuring the proper targeting of sperm derived from males to the fertilization site in the uterus of hermaphrodites. May act in the same signaling pathway as the neuropeptide flp-21. This is Serpentine receptor class beta-13 from Caenorhabditis elegans.